The following is a 304-amino-acid chain: 4-diphosphocytidyl-2-C-methyl-D-erythritol kinase (304 aa).

The active site involves K23. 111-121 (PIGGGLGGGSS) contributes to the ATP binding site. The active site involves D153.

The protein belongs to the GHMP kinase family. IspE subfamily. In terms of assembly, homodimer.

The enzyme catalyses 4-CDP-2-C-methyl-D-erythritol + ATP = 4-CDP-2-C-methyl-D-erythritol 2-phosphate + ADP + H(+). It participates in isoprenoid biosynthesis; isopentenyl diphosphate biosynthesis via DXP pathway; isopentenyl diphosphate from 1-deoxy-D-xylulose 5-phosphate: step 3/6. Its function is as follows. Catalyzes the phosphorylation of the position 2 hydroxy group of 4-diphosphocytidyl-2C-methyl-D-erythritol. This is 4-diphosphocytidyl-2-C-methyl-D-erythritol kinase from Wigglesworthia glossinidia brevipalpis.